A 214-amino-acid polypeptide reads, in one-letter code: Guanylate kinase (214 aa).

The Guanylate kinase-like domain occupies 12-191 (GLMLVMSSPS…SIAAVQAILA (180 aa)). An ATP-binding site is contributed by 19-26 (SPSGAGKT).

This sequence belongs to the guanylate kinase family.

Its subcellular location is the cytoplasm. It carries out the reaction GMP + ATP = GDP + ADP. Essential for recycling GMP and indirectly, cGMP. This Paramagnetospirillum magneticum (strain ATCC 700264 / AMB-1) (Magnetospirillum magneticum) protein is Guanylate kinase.